An 89-amino-acid polypeptide reads, in one-letter code: UPF0250 protein Bphy_0213 (89 aa).

This sequence belongs to the UPF0250 family.

The protein is UPF0250 protein Bphy_0213 of Paraburkholderia phymatum (strain DSM 17167 / CIP 108236 / LMG 21445 / STM815) (Burkholderia phymatum).